The sequence spans 126 residues: Glycine cleavage system H protein (126 aa).

One can recognise a Lipoyl-binding domain in the interval Asp-19–Glu-100. Lys-60 carries the post-translational modification N6-lipoyllysine.

It belongs to the GcvH family. As to quaternary structure, the glycine cleavage system is composed of four proteins: P, T, L and H. (R)-lipoate is required as a cofactor.

Its function is as follows. The glycine cleavage system catalyzes the degradation of glycine. The H protein shuttles the methylamine group of glycine from the P protein to the T protein. The polypeptide is Glycine cleavage system H protein (Koribacter versatilis (strain Ellin345)).